The primary structure comprises 342 residues: Replication factor C subunit 4 (342 aa).

Residues V24, V36, 61–68, N157, and R215 each bind ATP; that span reads GMPGIGKT.

This sequence belongs to the activator 1 small subunits family. As to quaternary structure, heteropentamer of subunits rfc1, rfc2, rfc3, rfc4 and rfc5 that forms a complex (RFC) with PCNA in the presence of ATP. Two other complexes exist where rfc1 can be replaced by either ctf18 or elg1 to form the ctf18-RFC or the elg1-RFC complexes respectively.

Its subcellular location is the nucleus. In terms of biological role, the elongation of primed DNA templates by DNA polymerase delta and epsilon requires the action of the accessory proteins PCNA and activator 1. The polypeptide is Replication factor C subunit 4 (rfc4) (Schizosaccharomyces pombe (strain 972 / ATCC 24843) (Fission yeast)).